A 761-amino-acid chain; its full sequence is Protein PHTF1 (761 aa).

The 145-residue stretch at 6 to 150 folds into the PHTF domain; the sequence is RDAISWYQKK…VHCQIVSTQI (145 aa). Transmembrane regions (helical) follow at residues 77 to 97, 99 to 119, and 121 to 141; these read GLVRVVFFPLFSSWWIQVTSL, IFVWLLLLYLMQVTAVVLYLL, and PIVSASEVLGPLCLMLLMGTV. The disordered stretch occupies residues 152-184; sequence RPSGNNGNRRRRKLRKTVNGDGSRDNGNNSPDK. The span at 170–181 shows a compositional bias: low complexity; the sequence is NGDGSRDNGNNS. N-linked (GlcNAc...) asparagine glycosylation is found at Asn179 and Asn224. Ser272, Ser276, Ser277, Ser333, and Ser335 each carry phosphoserine. A disordered region spans residues 345–414; it reads VFSQGSRSGM…NTIHSGTKRD (70 aa). Residues 347–363 are compositionally biased toward low complexity; sequence SQGSRSGMSGGSRSLNL. An N-linked (GlcNAc...) asparagine glycan is attached at Asn362. Residues 364–375 show a composition bias toward basic and acidic residues; the sequence is SRRDSESTRHDS. Asn430 carries an N-linked (GlcNAc...) asparagine glycan. Transmembrane regions (helical) follow at residues 472 to 492, 514 to 534, 610 to 630, and 644 to 664; these read GVGYQMLGNAVTVGLALFPFL, TLFCGAPPVTPVVILSIINFI, VVVSSVFLLTLSIAFICCAQV, and WEFLIWETALLLFLLRLASLG. Residues Asn673 and Asn732 are each glycosylated (N-linked (GlcNAc...) asparagine). A helical membrane pass occupies residues 736 to 756; sequence VVILSAVSGVISDLLGFNIRL.

Interacts with FEM1B. In terms of tissue distribution, widely expressed with highest levels in testis.

Its subcellular location is the endoplasmic reticulum membrane. The protein resides in the golgi apparatus. The protein localises to the cis-Golgi network membrane. This is Protein PHTF1 from Mus musculus (Mouse).